The sequence spans 406 residues: Argininosuccinate synthase (406 aa).

Residues 12 to 20 and Ala-39 each bind ATP; that span reads AYSGGLDTS. L-citrulline-binding residues include Tyr-90 and Ser-95. Residue Gly-120 participates in ATP binding. L-aspartate-binding residues include Thr-122, Asn-126, and Asp-127. An L-citrulline-binding site is contributed by Asn-126. Residues Arg-130, Ser-179, Ser-188, Glu-264, and Tyr-276 each coordinate L-citrulline.

This sequence belongs to the argininosuccinate synthase family. Type 1 subfamily. As to quaternary structure, homotetramer.

The protein resides in the cytoplasm. It catalyses the reaction L-citrulline + L-aspartate + ATP = 2-(N(omega)-L-arginino)succinate + AMP + diphosphate + H(+). It participates in amino-acid biosynthesis; L-arginine biosynthesis; L-arginine from L-ornithine and carbamoyl phosphate: step 2/3. In Citrifermentans bemidjiense (strain ATCC BAA-1014 / DSM 16622 / JCM 12645 / Bem) (Geobacter bemidjiensis), this protein is Argininosuccinate synthase.